A 305-amino-acid polypeptide reads, in one-letter code: Serine/threonine-protein phosphatase PP-X isozyme 1 (305 aa).

Mn(2+) contacts are provided by Asp51, His53, Asp79, and Asn111. The Proton donor role is filled by His112. Mn(2+)-binding residues include His161 and His236.

This sequence belongs to the PPP phosphatase family. PP-4 (PP-X) subfamily. As to quaternary structure, interacts with TAP46. Requires Mn(2+) as cofactor. Ubiquitous, mostly expressed in root mersitems, flowers, and vascular tissues.

It is found in the plastid stroma. It catalyses the reaction O-phospho-L-seryl-[protein] + H2O = L-seryl-[protein] + phosphate. The enzyme catalyses O-phospho-L-threonyl-[protein] + H2O = L-threonyl-[protein] + phosphate. The sequence is that of Serine/threonine-protein phosphatase PP-X isozyme 1 (PPX1) from Arabidopsis thaliana (Mouse-ear cress).